We begin with the raw amino-acid sequence, 94 residues long: Large ribosomal subunit protein eL31 (94 aa).

Belongs to the eukaryotic ribosomal protein eL31 family.

The sequence is that of Large ribosomal subunit protein eL31 (rpl31e) from Pyrococcus abyssi (strain GE5 / Orsay).